The chain runs to 344 residues: MAETDGAAAFTELRDPDWDESQLRQYTFPTRQIPRLSHTDPRAEVLINNEEPVVLTDTSLVYPALKWDIPYLQENIGNGDFSVYIAENHKFLYYDEKKMVNFQDFVPKSRRIEMKFSEFVDKMHQTEEQGGKGRVYLQQTLNDTVGRKIVVDFLGFNWNWINKQQAKRNWGPLTSNLLLIGMEGNVTPAHYDEQQNFFAQIKGHKRCILFPPDQFDCLYPYPVHHPCDRQSQVDFENPDYDKFPNFKNAVGYEAVVGPGDVLYIPMYWWHHIESLLNGGETITVNFWYKGAPTPKRIEYPLKAHQKVAIMRNIEKMLGEALGDPHEVGPLLNMMIKGRYDHGLS.

At Ala-2 the chain carries N-acetylalanine. In terms of domain architecture, JmjC spans 133 to 303 (GRVYLQQTLN…PKRIEYPLKA (171 aa)). Tyr-136 contributes to the 2-oxoglutarate binding site. Residues Asp-143 and 173-174 (LT) each bind substrate. Residue Thr-187 coordinates 2-oxoglutarate. Residues His-190 and Asp-192 each contribute to the Fe cation site. 192–194 (DEQ) lines the substrate pocket. 2-oxoglutarate-binding residues include Asn-196 and Lys-205. 229-230 (RQ) contributes to the substrate binding site. His-270 serves as a coordination point for Fe cation. Residue Asn-285 participates in 2-oxoglutarate binding. Substrate is bound by residues Ala-291 and Asn-312.

Homodimer; homodimerization is essential for catalytic activity. Requires Fe(2+) as cofactor.

The protein resides in the nucleus. It is found in the cytoplasm. The protein localises to the perinuclear region. The catalysed reaction is L-asparaginyl-[hypoxia-inducible factor alpha subunit] + 2-oxoglutarate + O2 = (3S)-3-hydroxy-L-asparaginyl-[hypoxia-inducible factor alpha subunit] + succinate + CO2. It carries out the reaction L-histidyl-[ankyrin-repeat domain protein] + 2-oxoglutarate + O2 = (3S)-3-hydroxy-L-histidyl-[ankyrin-repeat domain protein] + succinate + CO2. It catalyses the reaction L-asparaginyl-[ankyrin-repeat domain protein] + 2-oxoglutarate + O2 = (3S)-3-hydroxy-L-asparaginyl-[ankyrin-repeat domain protein] + succinate + CO2. The enzyme catalyses L-aspartyl-[ankyrin-repeat domain protein] + 2-oxoglutarate + O2 = (3S)-3-hydroxy-L-aspartyl-[ankyrin-repeat domain protein] + succinate + CO2. In terms of biological role, hydroxylates a specific Asn residue in the C-terminal transactivation domain (CAD) of HIF-1 alpha. The hydroxylation prevents interaction of HIF-1 with transcriptional coactivators. Also hydroxylates specific Asn, Asp and His residues within ankyrin repeat domain-containing proteins. The polypeptide is Hypoxia-inducible factor 1-alpha inhibitor (hif1an) (Danio rerio (Zebrafish)).